Consider the following 75-residue polypeptide: uncharacterized protein (75 aa).

Over residues 19–38 the composition is skewed to polar residues; it reads FHNTAPSKTNVNVPRANKSQ. Positions 19 to 42 are disordered; that stretch reads FHNTAPSKTNVNVPRANKSQSKGK. A helical transmembrane segment spans residues 47 to 66; that stretch reads LLVLVGTLALVTSVISVNYQ.

The protein localises to the membrane. This is an uncharacterized protein from Saccharomyces cerevisiae (strain ATCC 204508 / S288c) (Baker's yeast).